We begin with the raw amino-acid sequence, 386 residues long: Aspartate carbamoyltransferase 1, chloroplastic (386 aa).

Residues 1–39 (MTVASMLSSNSMNVGVSNPKMSSKTSACCLLNRPWPSSC) constitute a chloroplast transit peptide. Residues R132 and T133 each coordinate carbamoyl phosphate. Residues R132 and T133 each contribute to the UMP site. Position 162 (K162) interacts with L-aspartate. Carbamoyl phosphate contacts are provided by R183, H211, and Q214. UMP contacts are provided by R183 and H211. UMP is bound by residues R244 and R306. 2 residues coordinate L-aspartate: R244 and R306. Carbamoyl phosphate is bound by residues L346 and P347.

Belongs to the aspartate/ornithine carbamoyltransferase superfamily. ATCase family. As to quaternary structure, homotrimer.

The protein localises to the plastid. Its subcellular location is the chloroplast. The enzyme catalyses carbamoyl phosphate + L-aspartate = N-carbamoyl-L-aspartate + phosphate + H(+). It functions in the pathway pyrimidine metabolism; UMP biosynthesis via de novo pathway; (S)-dihydroorotate from bicarbonate: step 2/3. Feedback inhibited by UMP. Catalyzes the condensation of carbamoyl phosphate and aspartate to form carbamoyl aspartate and inorganic phosphate, the committed step in the de novo pyrimidine nucleotide biosynthesis pathway. The polypeptide is Aspartate carbamoyltransferase 1, chloroplastic (PYRB1) (Pisum sativum (Garden pea)).